We begin with the raw amino-acid sequence, 87 residues long: Venom serine protease inhibitor (87 aa).

The N-terminal stretch at 1–23 (MPRLVLVSFLFLAIFSVFIGGFA) is a signal peptide. Cystine bridges form between Cys27/Cys61, Cys36/Cys57, Cys40/Cys53, Cys44/Cys81, and Cys63/Cys75. Positions 27–81 (CPRNEIFTRCHAACQPSCARLARKPFCIKICKPGCICTSGYLRNKNNVCVPRSRC) constitute a TIL domain.

It belongs to the serine protease inhibitor-like (TIL domain-containing) family. Specifically expressed by the venom gland.

The protein resides in the secreted. In terms of biological role, antifibrinolytic and antimicrobial serine protease inhibitor. Inhibits trypsin, plasmin and microbial serine proteases but not chymotrypsin, thrombin and elastase. Inhibits the plasmin-mediated degradation of fibrin to fibrin degradation products. Also binds to bacterial and fungal surfaces and exhibits antimicrobial activity against fungi as well as Gram-positive and Gram-negative bacteria. This Apis cerana (Indian honeybee) protein is Venom serine protease inhibitor.